An 81-amino-acid polypeptide reads, in one-letter code: MQKGIHPDYHLVVFQDSTTGFKFISGSTATSAETVEWEDGNTYPLIRVEITSDSHPFYTGKQKFTKADGAVDRFNKKYGLK.

Belongs to the bacterial ribosomal protein bL31 family. Type B subfamily. Part of the 50S ribosomal subunit.

In Lactiplantibacillus plantarum (strain ATCC BAA-793 / NCIMB 8826 / WCFS1) (Lactobacillus plantarum), this protein is Large ribosomal subunit protein bL31B (rpmE2).